The sequence spans 246 residues: Ribonuclease 3 (246 aa).

The RNase III domain occupies 10 to 143 (LERLEQALDY…LLGAIYLDGG (134 aa)). Glu56 contributes to the Mg(2+) binding site. The active site involves Asp60. Mg(2+) is bound by residues Asn129 and Glu132. Glu132 is an active-site residue. One can recognise a DRBM domain in the interval 170 to 239 (DYKTLLQEYL…AQQALELLIE (70 aa)).

It belongs to the ribonuclease III family. As to quaternary structure, homodimer. Requires Mg(2+) as cofactor.

The protein resides in the cytoplasm. The enzyme catalyses Endonucleolytic cleavage to 5'-phosphomonoester.. Its function is as follows. Digests double-stranded RNA. Involved in the processing of primary rRNA transcript to yield the immediate precursors to the large and small rRNAs (23S and 16S). Processes some mRNAs, and tRNAs when they are encoded in the rRNA operon. Processes pre-crRNA and tracrRNA of type II CRISPR loci if present in the organism. The chain is Ribonuclease 3 from Magnetococcus marinus (strain ATCC BAA-1437 / JCM 17883 / MC-1).